We begin with the raw amino-acid sequence, 645 residues long: 1,4-alpha-glucan branching enzyme GlgB (645 aa).

Asp309 acts as the Nucleophile in catalysis. Glu352 acts as the Proton donor in catalysis. The segment at 621–645 (MRKGSKKQDGKKAELRSNATSRRKR) is disordered. A compositionally biased stretch (basic and acidic residues) spans 626–635 (KKQDGKKAEL).

Belongs to the glycosyl hydrolase 13 family. GlgB subfamily. As to quaternary structure, monomer.

It carries out the reaction Transfers a segment of a (1-&gt;4)-alpha-D-glucan chain to a primary hydroxy group in a similar glucan chain.. Its pathway is glycan biosynthesis; glycogen biosynthesis. Its function is as follows. Catalyzes the formation of the alpha-1,6-glucosidic linkages in glycogen by scission of a 1,4-alpha-linked oligosaccharide from growing alpha-1,4-glucan chains and the subsequent attachment of the oligosaccharide to the alpha-1,6 position. This Bacillus cytotoxicus (strain DSM 22905 / CIP 110041 / 391-98 / NVH 391-98) protein is 1,4-alpha-glucan branching enzyme GlgB.